A 1347-amino-acid chain; its full sequence is Serine-aspartate repeat-containing protein D (1347 aa).

The signal sequence occupies residues 1–35 (MLNRENKTAITRKGMVSNRLNKFSIRKYTVGTASI). The YSIRK-G/S signaling motif signature appears at 23–34 (FSIRKYTVGTAS). Residues 36–568 (LVGTTLIFGL…NNQSGGAGQE (533 aa)) are ligand binding A region. The tract at residues 55-185 (STNKELNEAT…NKKVDAKTES (131 aa)) is disordered. 2 stretches are compositionally biased toward polar residues: residues 62 to 71 (EATTSASDNQ) and 94 to 109 (EMVS…NGNK). Over residues 130–145 (KSDEQASPKSTNEDLN) the composition is skewed to basic and acidic residues. 2 stretches are compositionally biased toward polar residues: residues 146–155 (TKQTISNQEA) and 163–173 (NKSVVNAQPTN). Basic and acidic residues predominate over residues 174–183 (EENKKVDAKT). CNA-B domains are found at residues 569–680 (VYKI…IYKP), 681–791 (KYNL…YKTP), 792–901 (KYNL…FYKP), 902–1012 (TYNL…YKTS), and 1013–1123 (KYSL…EEDT). 3 disordered regions span residues 857–883 (ETPS…TSTT), 972–992 (YTPT…GLTT), and 1078–1323 (EKPA…SNNA). Polar residues-rich tracts occupy residues 860–869 (SGYTPTQVGS) and 972–981 (YTPTSVTSGN). Composition is skewed to acidic residues over residues 1091–1101 (TEDDKDADGGE) and 1118–1286 (YFEE…DSDS). The LPXTG sorting signal signature appears at 1310–1314 (LPETG). Thr1313 is subject to Pentaglycyl murein peptidoglycan amidated threonine. A propeptide spans 1314 to 1347 (GNENSGSNNATLFGGLFAALGSLLLFGRRKKQNK) (removed by sortase).

This sequence belongs to the serine-aspartate repeat-containing protein (SDr) family. In terms of assembly, interacts with host DSG1; this interaction increases S.aureus adherence to keratinocytes.

The protein resides in the secreted. It is found in the cell wall. Cell surface-associated calcium-binding protein which plays an important role in adhesion and pathogenesis. Mediates interactions with components of the extracellular matrix such as host DSG1 to promote bacterial adhesion to host cells. Contributes to the resistance to killing by innate immune components such as neutrophils present in blood and thus attenuates bacterial clearance. The protein is Serine-aspartate repeat-containing protein D (sdrD) of Staphylococcus aureus (strain MW2).